Reading from the N-terminus, the 251-residue chain is CDP-diacylglycerol pyrophosphatase (251 aa).

A helical transmembrane segment spans residues A4 to W24.

It belongs to the Cdh family.

The protein resides in the cell inner membrane. It catalyses the reaction a CDP-1,2-diacyl-sn-glycerol + H2O = a 1,2-diacyl-sn-glycero-3-phosphate + CMP + 2 H(+). Its pathway is phospholipid metabolism; CDP-diacylglycerol degradation; phosphatidate from CDP-diacylglycerol: step 1/1. The sequence is that of CDP-diacylglycerol pyrophosphatase from Escherichia coli O81 (strain ED1a).